The primary structure comprises 473 residues: MKTLYSLRRFYPVETLFNGTLALAGRDQETTGFAWWAGNARLINLSGKLLGAHVAHAGLIVFWAGAMNLFEVAHFVPEKPMYEQGLILLPHLATLGWGVGPGGEVIDTFPYFVSGVLHLISSAVLGFGGIYHALLGPETLEESFPFFGYVWKDRNKMTTILGIHLILLGIGAFLLVFKALYFGGVYDTWAPGGGDVRKITNLTLSPSVIFGYLLKSPFGGEGWIVSVDDLEDIIGGHVWLGSICIFGGIWHILTKPFAWARRALVWSGEAYLSYSLGALSVFGFIACCFVWFNNTAYPSEFYGPTGPEASQAQAFTFLVRDQRLGANVGSAQGPTGLGKYLMRSPTGEVIFGGETMRFWDLRAPWLEPLRGPNGLDLSRLKKDIQPWQERRSAEYMTHAPLGSLNSVGGVATEINAVNYVSPRSWLATSHFVLGFFLFVGHLWHAGRARAAAAGFEKGIDRDFEPVLSMTPLN.

Positions 1-14 (MKTLYSLRRFYPVE) are excised as a propeptide. Thr15 is modified (N-acetylthreonine). Phosphothreonine is present on Thr15. 5 helical membrane passes run 69–93 (LFEV…PHLA), 134–155 (LLGP…KDRN), 178–200 (KALY…RKIT), 255–275 (KPFA…LSYS), and 291–312 (WFNN…ASQA). Residue Glu367 coordinates [CaMn4O5] cluster. Residues 447–471 (RARAAAAGFEKGIDRDFEPVLSMTP) form a helical membrane-spanning segment.

Belongs to the PsbB/PsbC family. PsbC subfamily. In terms of assembly, PSII is composed of 1 copy each of membrane proteins PsbA, PsbB, PsbC, PsbD, PsbE, PsbF, PsbH, PsbI, PsbJ, PsbK, PsbL, PsbM, PsbT, PsbX, PsbY, PsbZ, Psb30/Ycf12, at least 3 peripheral proteins of the oxygen-evolving complex and a large number of cofactors. It forms dimeric complexes. Requires Binds multiple chlorophylls and provides some of the ligands for the Ca-4Mn-5O cluster of the oxygen-evolving complex. It may also provide a ligand for a Cl- that is required for oxygen evolution. PSII binds additional chlorophylls, carotenoids and specific lipids. as cofactor.

The protein resides in the plastid. Its subcellular location is the chloroplast thylakoid membrane. In terms of biological role, one of the components of the core complex of photosystem II (PSII). It binds chlorophyll and helps catalyze the primary light-induced photochemical processes of PSII. PSII is a light-driven water:plastoquinone oxidoreductase, using light energy to abstract electrons from H(2)O, generating O(2) and a proton gradient subsequently used for ATP formation. The chain is Photosystem II CP43 reaction center protein from Gossypium hirsutum (Upland cotton).